Here is a 549-residue protein sequence, read N- to C-terminus: Oxygen-dependent choline dehydrogenase (549 aa).

4–33 (DFVIIGSGSAGSALAYRLSEGGKNSVIVIE) contacts FAD. H465 functions as the Proton acceptor in the catalytic mechanism.

The protein belongs to the GMC oxidoreductase family. The cofactor is FAD.

It carries out the reaction choline + A = betaine aldehyde + AH2. The enzyme catalyses betaine aldehyde + NAD(+) + H2O = glycine betaine + NADH + 2 H(+). It participates in amine and polyamine biosynthesis; betaine biosynthesis via choline pathway; betaine aldehyde from choline (cytochrome c reductase route): step 1/1. Involved in the biosynthesis of the osmoprotectant glycine betaine. Catalyzes the oxidation of choline to betaine aldehyde and betaine aldehyde to glycine betaine at the same rate. This is Oxygen-dependent choline dehydrogenase from Rhizobium johnstonii (strain DSM 114642 / LMG 32736 / 3841) (Rhizobium leguminosarum bv. viciae).